A 502-amino-acid polypeptide reads, in one-letter code: Probable glycine dehydrogenase (decarboxylating) subunit 2 (502 aa).

Residue K273 is modified to N6-(pyridoxal phosphate)lysine.

Belongs to the GcvP family. C-terminal subunit subfamily. In terms of assembly, the glycine cleavage system is composed of four proteins: P, T, L and H. In this organism, the P 'protein' is a heterodimer of two subunits. Requires pyridoxal 5'-phosphate as cofactor.

It catalyses the reaction N(6)-[(R)-lipoyl]-L-lysyl-[glycine-cleavage complex H protein] + glycine + H(+) = N(6)-[(R)-S(8)-aminomethyldihydrolipoyl]-L-lysyl-[glycine-cleavage complex H protein] + CO2. In terms of biological role, the glycine cleavage system catalyzes the degradation of glycine. The P protein binds the alpha-amino group of glycine through its pyridoxal phosphate cofactor; CO(2) is released and the remaining methylamine moiety is then transferred to the lipoamide cofactor of the H protein. This Thermococcus gammatolerans (strain DSM 15229 / JCM 11827 / EJ3) protein is Probable glycine dehydrogenase (decarboxylating) subunit 2.